The sequence spans 406 residues: Serine hydroxymethyltransferase (406 aa).

(6S)-5,6,7,8-tetrahydrofolate-binding positions include Leu-111 and 115–117; that span reads GHL. At Lys-220 the chain carries N6-(pyridoxal phosphate)lysine.

The protein belongs to the SHMT family. In terms of assembly, homodimer. The cofactor is pyridoxal 5'-phosphate.

The protein localises to the cytoplasm. The catalysed reaction is (6R)-5,10-methylene-5,6,7,8-tetrahydrofolate + glycine + H2O = (6S)-5,6,7,8-tetrahydrofolate + L-serine. It participates in one-carbon metabolism; tetrahydrofolate interconversion. The protein operates within amino-acid biosynthesis; glycine biosynthesis; glycine from L-serine: step 1/1. Functionally, catalyzes the reversible interconversion of serine and glycine with tetrahydrofolate (THF) serving as the one-carbon carrier. This reaction serves as the major source of one-carbon groups required for the biosynthesis of purines, thymidylate, methionine, and other important biomolecules. Also exhibits THF-independent aldolase activity toward beta-hydroxyamino acids, producing glycine and aldehydes, via a retro-aldol mechanism. The protein is Serine hydroxymethyltransferase of Mycoplasma pneumoniae (strain ATCC 29342 / M129 / Subtype 1) (Mycoplasmoides pneumoniae).